The chain runs to 870 residues: Aminopeptidase N (870 aa).

Substrate is bound by residues E121 and 261–265 (GAMEN). Position 297 (H297) interacts with Zn(2+). E298 functions as the Proton acceptor in the catalytic mechanism. Positions 301 and 320 each coordinate Zn(2+).

It belongs to the peptidase M1 family. Requires Zn(2+) as cofactor.

The protein localises to the cell inner membrane. It carries out the reaction Release of an N-terminal amino acid, Xaa-|-Yaa- from a peptide, amide or arylamide. Xaa is preferably Ala, but may be most amino acids including Pro (slow action). When a terminal hydrophobic residue is followed by a prolyl residue, the two may be released as an intact Xaa-Pro dipeptide.. In terms of biological role, aminopeptidase N is involved in the degradation of intracellular peptides generated by protein breakdown during normal growth as well as in response to nutrient starvation. This chain is Aminopeptidase N (pepN), found in Escherichia coli (strain K12).